Reading from the N-terminus, the 135-residue chain is Envelope glycoprotein N (135 aa).

The first 19 residues, methionine 1–serine 19, serve as a signal peptide directing secretion. Topologically, residues asparagine 20–serine 98 are virion surface. Positions asparagine 21 to threonine 68 are enriched in low complexity. The segment at asparagine 21–valine 73 is disordered. Residues phenylalanine 99 to leucine 119 form a helical membrane-spanning segment. Residues arginine 120–tyrosine 135 lie on the Intravirion side of the membrane.

The protein belongs to the herpesviridae glycoprotein N family. As to quaternary structure, interacts (via N-terminus) with gM (via N-terminus). The gM-gN heterodimer forms the gCII complex. O-glycosylated.

The protein resides in the virion membrane. The protein localises to the host membrane. It localises to the host Golgi apparatus. Its subcellular location is the host trans-Golgi network. Its function is as follows. Envelope glycoprotein necessary for proper maturation of gM and modulation of its membrane fusion activity. Also plays a critical role in virion morphogenesis. The sequence is that of Envelope glycoprotein N from Homo sapiens (Human).